The primary structure comprises 122 residues: Probable DNA-directed RNA polymerase II subunit RPB11 (122 aa).

Belongs to the archaeal Rpo11/eukaryotic RPB11/RPC19 RNA polymerase subunit family. In terms of assembly, component of the RNA polymerase II (Pol II) complex consisting of 12 subunits.

It localises to the nucleus. Functionally, DNA-dependent RNA polymerase catalyzes the transcription of DNA into RNA using the four ribonucleoside triphosphates as substrates. Component of RNA polymerase II which synthesizes mRNA precursors and many functional non-coding RNAs. Pol II is the central component of the basal RNA polymerase II transcription machinery. It is composed of mobile elements that move relative to each other. RPB11 is part of the core element with the central large cleft. The protein is Probable DNA-directed RNA polymerase II subunit RPB11 (rpb-11) of Caenorhabditis briggsae.